The sequence spans 151 residues: Actin-depolymerizing factor 10 (151 aa).

Positions 15 to 149 constitute an ADF-H domain; that stretch reads PAWIEVPEKS…DLEVLRGRAN (135 aa).

This sequence belongs to the actin-binding proteins ADF family.

Actin-depolymerizing protein. Severs actin filaments (F-actin) and binds to actin monomers. This is Actin-depolymerizing factor 10 (ADF10) from Oryza sativa subsp. japonica (Rice).